Consider the following 476-residue polypeptide: Aspartyl/glutamyl-tRNA(Asn/Gln) amidotransferase subunit B (476 aa).

It belongs to the GatB/GatE family. GatB subfamily. As to quaternary structure, heterotrimer of A, B and C subunits.

The enzyme catalyses L-glutamyl-tRNA(Gln) + L-glutamine + ATP + H2O = L-glutaminyl-tRNA(Gln) + L-glutamate + ADP + phosphate + H(+). It catalyses the reaction L-aspartyl-tRNA(Asn) + L-glutamine + ATP + H2O = L-asparaginyl-tRNA(Asn) + L-glutamate + ADP + phosphate + 2 H(+). Its function is as follows. Allows the formation of correctly charged Asn-tRNA(Asn) or Gln-tRNA(Gln) through the transamidation of misacylated Asp-tRNA(Asn) or Glu-tRNA(Gln) in organisms which lack either or both of asparaginyl-tRNA or glutaminyl-tRNA synthetases. The reaction takes place in the presence of glutamine and ATP through an activated phospho-Asp-tRNA(Asn) or phospho-Glu-tRNA(Gln). The polypeptide is Aspartyl/glutamyl-tRNA(Asn/Gln) amidotransferase subunit B (Geobacillus kaustophilus (strain HTA426)).